Reading from the N-terminus, the 116-residue chain is MSNIIKQLEQEQLKQNIPSFRPGDTLEVKVWVVEGAKKRLQAFEGVVIAIRNRGLHSAFTLRKVSNGTGVERVFQTHSPAIDSISVKRKGAVRKAKLYYLRERSGKSARIKERLGA.

Belongs to the bacterial ribosomal protein bL19 family.

Its function is as follows. This protein is located at the 30S-50S ribosomal subunit interface and may play a role in the structure and function of the aminoacyl-tRNA binding site. The sequence is that of Large ribosomal subunit protein bL19 from Mannheimia succiniciproducens (strain KCTC 0769BP / MBEL55E).